We begin with the raw amino-acid sequence, 446 residues long: Inhibitor of Apoptosis OPG037 (446 aa).

6 ANK repeats span residues 71-100 (DGNYPLHIASKINNNRIVAMLLTHGADPNA), 104-135 (QHKTPLYYLSGTDDEVIERINLLVQYGAKINN), 207-237 (DGNTPLHIVCSKTVKNVDIINLLLPSTDVNK), 241-271 (FGDSPLTLLIKTLSPAHLINKLLSTSNVITD), 296-325 (YDSTDFKMAVEVGSIRCIKYLLDNDIICED), and 327-351 (MYYAVLSEYETMVDYLLFNHFSVDS).

It belongs to the orthopoxvirus OPG037 protein family. As to quaternary structure, may interact with host caspase-9-Apaf-1 complex.

The protein resides in the host cytoplasm. Its function is as follows. Inhibits host apoptosis. Acts by associating with host apoptosome. The polypeptide is Inhibitor of Apoptosis OPG037 (OPG037) (Variola virus (isolate Human/India/Ind3/1967) (VARV)).